Here is a 202-residue protein sequence, read N- to C-terminus: tRNA (pseudouridine(54)-N(1))-methyltransferase (202 aa).

The S-adenosyl-L-methionine site is built by L134 and G155.

Belongs to the methyltransferase superfamily. TrmY family. As to quaternary structure, homodimer.

The protein resides in the cytoplasm. The enzyme catalyses pseudouridine(54) in tRNA + S-adenosyl-L-methionine = N(1)-methylpseudouridine(54) in tRNA + S-adenosyl-L-homocysteine + H(+). In terms of biological role, specifically catalyzes the N1-methylation of pseudouridine at position 54 (Psi54) in tRNAs. This is tRNA (pseudouridine(54)-N(1))-methyltransferase from Thermococcus gammatolerans (strain DSM 15229 / JCM 11827 / EJ3).